Consider the following 482-residue polypeptide: Cardiolipin synthase (482 aa).

The next 2 membrane-spanning stretches (helical) occupy residues 4 to 24 and 34 to 54; these read LAYLLVVLLILNVFFAAVTVF and WAWLLVLTFVPIFGFIIYLIF. PLD phosphodiesterase domains follow at residues 217-244 and 395-422; these read LNYRNHRKLAIIDGDISYIGGFNIGDEY and DNGFIHAKTLVVDGEIASVGTANMDFRS. Residues histidine 222, lysine 224, aspartate 229, histidine 400, lysine 402, and aspartate 407 contribute to the active site.

It belongs to the phospholipase D family. Cardiolipin synthase subfamily.

Its subcellular location is the cell membrane. It carries out the reaction 2 a 1,2-diacyl-sn-glycero-3-phospho-(1'-sn-glycerol) = a cardiolipin + glycerol. In terms of biological role, catalyzes the reversible phosphatidyl group transfer from one phosphatidylglycerol molecule to another to form cardiolipin (CL) (diphosphatidylglycerol) and glycerol. This chain is Cardiolipin synthase (cls), found in Listeria welshimeri serovar 6b (strain ATCC 35897 / DSM 20650 / CCUG 15529 / CIP 8149 / NCTC 11857 / SLCC 5334 / V8).